The sequence spans 134 residues: Peroxisomal testis-specific protein 1 (134 aa).

Positions 131-134 (NHLL) match the Microbody targeting signal motif.

It localises to the peroxisome. The protein is Peroxisomal testis-specific protein 1 (PXT1) of Homo sapiens (Human).